The following is a 206-amino-acid chain: Imidazole glycerol phosphate synthase subunit HisH (206 aa).

The Glutamine amidotransferase type-1 domain occupies 1–206; sequence MIVIIDYGMG…LRILKNFGDM (206 aa). Cys79 serves as the catalytic Nucleophile. Catalysis depends on residues His188 and Glu190.

Heterodimer of HisH and HisF.

The protein resides in the cytoplasm. It catalyses the reaction 5-[(5-phospho-1-deoxy-D-ribulos-1-ylimino)methylamino]-1-(5-phospho-beta-D-ribosyl)imidazole-4-carboxamide + L-glutamine = D-erythro-1-(imidazol-4-yl)glycerol 3-phosphate + 5-amino-1-(5-phospho-beta-D-ribosyl)imidazole-4-carboxamide + L-glutamate + H(+). The enzyme catalyses L-glutamine + H2O = L-glutamate + NH4(+). It functions in the pathway amino-acid biosynthesis; L-histidine biosynthesis; L-histidine from 5-phospho-alpha-D-ribose 1-diphosphate: step 5/9. Its function is as follows. IGPS catalyzes the conversion of PRFAR and glutamine to IGP, AICAR and glutamate. The HisH subunit catalyzes the hydrolysis of glutamine to glutamate and ammonia as part of the synthesis of IGP and AICAR. The resulting ammonia molecule is channeled to the active site of HisF. The polypeptide is Imidazole glycerol phosphate synthase subunit HisH (Syntrophotalea carbinolica (strain DSM 2380 / NBRC 103641 / GraBd1) (Pelobacter carbinolicus)).